The sequence spans 556 residues: 2-succinyl-5-enolpyruvyl-6-hydroxy-3-cyclohexene-1-carboxylate synthase (556 aa).

The protein belongs to the TPP enzyme family. MenD subfamily. As to quaternary structure, homodimer. The cofactor is Mg(2+). It depends on Mn(2+) as a cofactor. Requires thiamine diphosphate as cofactor.

It catalyses the reaction isochorismate + 2-oxoglutarate + H(+) = 5-enolpyruvoyl-6-hydroxy-2-succinyl-cyclohex-3-ene-1-carboxylate + CO2. The protein operates within quinol/quinone metabolism; 1,4-dihydroxy-2-naphthoate biosynthesis; 1,4-dihydroxy-2-naphthoate from chorismate: step 2/7. It functions in the pathway quinol/quinone metabolism; menaquinone biosynthesis. Its function is as follows. Catalyzes the thiamine diphosphate-dependent decarboxylation of 2-oxoglutarate and the subsequent addition of the resulting succinic semialdehyde-thiamine pyrophosphate anion to isochorismate to yield 2-succinyl-5-enolpyruvyl-6-hydroxy-3-cyclohexene-1-carboxylate (SEPHCHC). The polypeptide is 2-succinyl-5-enolpyruvyl-6-hydroxy-3-cyclohexene-1-carboxylate synthase (Escherichia coli O8 (strain IAI1)).